Consider the following 271-residue polypeptide: Putative glucose-6-phosphate 1-epimerase (271 aa).

Substrate is bound by residues arginine 71 and arginine 93. The active site involves histidine 151. A substrate-binding site is contributed by aspartate 193. Residue glutamate 249 is part of the active site.

The protein belongs to the glucose-6-phosphate 1-epimerase family.

The enzyme catalyses alpha-D-glucose 6-phosphate = beta-D-glucose 6-phosphate. This Haemophilus influenzae (strain ATCC 51907 / DSM 11121 / KW20 / Rd) protein is Putative glucose-6-phosphate 1-epimerase.